Reading from the N-terminus, the 226-residue chain is Exosome complex component rrp46 (226 aa).

The segment at 205-226 (NESDGHENEKNPKEDVEMDVVA) is disordered. Residues 207 to 219 (SDGHENEKNPKED) are compositionally biased toward basic and acidic residues.

This sequence belongs to the RNase PH family. In terms of assembly, component of the RNA exosome complex. Specifically part of the catalytically inactive RNA exosome core complex (Exo-9) which may associate with the catalytic subunits rrp6 and dis3 in cytoplasmic- and nuclear-specific RNA exosome complex forms. Exo-9 is formed by a hexameric base ring of RNase PH domain-containing subunits and a cap ring consisting of csl4, rrp4 and rrp40.

The protein localises to the cytoplasm. It is found in the nucleus. It localises to the nucleolus. Non-catalytic component of the RNA exosome complex which has 3'-&gt;5' exoribonuclease activity and participates in a multitude of cellular RNA processing and degradation events. In the nucleus, the RNA exosome complex is involved in proper maturation of stable RNA species such as rRNA, snRNA and snoRNA, in the elimination of RNA processing by-products and non-coding 'pervasive' transcripts, such as antisense RNA species and cryptic unstable transcripts (CUTs), and of mRNAs with processing defects, thereby limiting or excluding their export to the cytoplasm. In the cytoplasm, the RNA exosome complex is involved in general mRNA turnover and in RNA surveillance pathways, preventing translation of aberrant mRNAs. The catalytic inactive RNA exosome core complex of 9 subunits (Exo-9) is proposed to play a pivotal role in the binding and presentation of RNA for ribonucleolysis, and to serve as a scaffold for the association with catalytic subunits and accessory proteins or complexes. ski6 is part of the hexameric ring of RNase PH domain-containing subunits proposed to form a central channel which threads RNA substrates for degradation. This Schizosaccharomyces pombe (strain 972 / ATCC 24843) (Fission yeast) protein is Exosome complex component rrp46 (rrp46).